The chain runs to 529 residues: Laccase-1 (529 aa).

The signal sequence occupies residues 1 to 23 (MFPGARILATLTLALHLLHGTHA). Plastocyanin-like domains lie at 25 to 159 (IGPT…FIVY), 170 to 312 (DVDN…ILRY), and 380 to 499 (TAPV…FAED). Asn57 carries an N-linked (GlcNAc...) asparagine glycan. Residues His96, His98, His141, and His143 each coordinate Cu cation. Disulfide bonds link Cys117–Cys514 and Cys149–Cys236. N-linked (GlcNAc...) asparagine glycosylation is found at Asn239 and Asn282. Cu cation is bound by residues His425, His428, His430, His481, Cys482, His483, and His487.

Belongs to the multicopper oxidase family. Cu cation serves as cofactor.

It localises to the secreted. The catalysed reaction is 4 hydroquinone + O2 = 4 benzosemiquinone + 2 H2O. Functionally, lignin degradation and detoxification of lignin-derived products. The sequence is that of Laccase-1 (POX1) from Pleurotus ostreatus (Oyster mushroom).